The following is a 237-amino-acid chain: MSSTAPWDQLTWQPSSDQLQQFNRLQELLREWNGKVNLTRLVEGEDYWISQIFDSLWPLQPWLSKGEPLKVIDVGTGGGFPGLAIAIALPQAQLTLVDSVGRKVQAVQAMADALGLTERVQLRCERAEKTGRDPHCRRQFQLAVARAVAAAPVVAEYLVPLLSADGTALLYRGQWSDEDQRQLQRAAAQLNSSTETIQVQELPAERGLRHVIPLRPQGVCPKQYPRAVGVPAKLPLA.

Residues Gly-75, Phe-80, 127 to 128, and Arg-146 each bind S-adenosyl-L-methionine; that span reads AE.

This sequence belongs to the methyltransferase superfamily. RNA methyltransferase RsmG family.

Its subcellular location is the cytoplasm. Its function is as follows. Specifically methylates the N7 position of a guanine in 16S rRNA. This is Ribosomal RNA small subunit methyltransferase G from Synechococcus sp. (strain RCC307).